The sequence spans 127 residues: MSLLRNRLQDLPALCLCVLVLACIGACQSEAYEGTPSPPPKLKMSHWSLVMGRMKELLEPVLNRTRDRWQWFWSPSTFRGFMQTYYDDHLRDLGPRTKAWLLKSKESLLNKTHSLCPRIVCGDKDQG.

The first 27 residues, 1–27, serve as a signal peptide directing secretion; the sequence is MSLLRNRLQDLPALCLCVLVLACIGAC.

It belongs to the apolipoprotein C4 family.

Its subcellular location is the secreted. Functionally, may participate in lipoprotein metabolism. The sequence is that of Apolipoprotein C-IV (APOC4) from Papio hamadryas (Hamadryas baboon).